Consider the following 819-residue polypeptide: uncharacterized protein (819 aa).

Helical transmembrane passes span 45-65, 100-120, 135-155, 158-178, 252-272, and 298-318; these read CLFY…PIVL, FLLG…IHIL, YTIG…VFGI, VLVP…ILLF, YLLG…WVFL, and FVLA…EYLV.

Belongs to the ycf78 family.

It localises to the plastid. It is found in the chloroplast membrane. This is an uncharacterized protein from Chlorella vulgaris (Green alga).